The sequence spans 428 residues: Elongation factor 1-alpha (428 aa).

A tr-type G domain is found at 5–225; the sequence is KPILNVAFIG…DGFQPPEKPT (221 aa). Positions 14–21 are G1; it reads GHVDAGKS. 14–21 is a GTP binding site; it reads GHVDAGKS. Serine 21 contributes to the Mg(2+) binding site. Positions 70-74 are G2; sequence GVTID. The G3 stretch occupies residues 91–94; it reads DCPG. Residues 91–95 and 149–152 contribute to the GTP site; these read DCPGH and NKMD. A G4 region spans residues 149 to 152; the sequence is NKMD. The tract at residues 189-191 is G5; that stretch reads ASL.

Belongs to the TRAFAC class translation factor GTPase superfamily. Classic translation factor GTPase family. EF-Tu/EF-1A subfamily.

It is found in the cytoplasm. The enzyme catalyses GTP + H2O = GDP + phosphate + H(+). In terms of biological role, GTP hydrolase that promotes the GTP-dependent binding of aminoacyl-tRNA to the A-site of ribosomes during protein biosynthesis. The sequence is that of Elongation factor 1-alpha from Methanococcus vannielii (strain ATCC 35089 / DSM 1224 / JCM 13029 / OCM 148 / SB).